The chain runs to 252 residues: Imidazole glycerol phosphate synthase subunit HisF (252 aa).

Residues D11 and D130 contribute to the active site.

It belongs to the HisA/HisF family. As to quaternary structure, heterodimer of HisH and HisF.

Its subcellular location is the cytoplasm. The catalysed reaction is 5-[(5-phospho-1-deoxy-D-ribulos-1-ylimino)methylamino]-1-(5-phospho-beta-D-ribosyl)imidazole-4-carboxamide + L-glutamine = D-erythro-1-(imidazol-4-yl)glycerol 3-phosphate + 5-amino-1-(5-phospho-beta-D-ribosyl)imidazole-4-carboxamide + L-glutamate + H(+). Its pathway is amino-acid biosynthesis; L-histidine biosynthesis; L-histidine from 5-phospho-alpha-D-ribose 1-diphosphate: step 5/9. IGPS catalyzes the conversion of PRFAR and glutamine to IGP, AICAR and glutamate. The HisF subunit catalyzes the cyclization activity that produces IGP and AICAR from PRFAR using the ammonia provided by the HisH subunit. This chain is Imidazole glycerol phosphate synthase subunit HisF, found in Azoarcus sp. (strain BH72).